A 342-amino-acid polypeptide reads, in one-letter code: Endo-1,4-beta-xylanase A (342 aa).

A GH10 domain is found at Glu11 to Phe342. Glu144 (proton donor) is an active-site residue. The active-site Nucleophile is the Glu252.

It belongs to the glycosyl hydrolase 10 (cellulase F) family. Cytoplasmic xylanase subfamily.

Its subcellular location is the cytoplasm. It carries out the reaction Endohydrolysis of (1-&gt;4)-beta-D-xylosidic linkages in xylans.. Its pathway is glycan degradation; xylan degradation. The sequence is that of Endo-1,4-beta-xylanase A (xynA) from Caldicellulosiruptor saccharolyticus (Caldocellum saccharolyticum).